Here is a 326-residue protein sequence, read N- to C-terminus: Triacylglycerol lipase 2 (326 aa).

Residues 142–146 (AHSMG) carry the (A/G)XSXG lipase motif motif.

In terms of assembly, interacts with MIA40; forms mixed disulfide intermediates with MIA40.

The protein resides in the mitochondrion. The protein localises to the mitochondrion intermembrane space. The enzyme catalyses a triacylglycerol + H2O = a diacylglycerol + a fatty acid + H(+). It carries out the reaction 1,2,3-tri-(9Z-octadecenoyl)-glycerol + H2O = di-(9Z)-octadecenoylglycerol + (9Z)-octadecenoate + H(+). It catalyses the reaction 1,2,3-tributanoylglycerol + H2O = dibutanoylglycerol + butanoate + H(+). The catalysed reaction is 1,2,3-trioctanoylglycerol + H2O = dioctanoylglycerol + octanoate + H(+). The enzyme catalyses di-(9Z)-octadecenoylglycerol + H2O = (9Z-octadecenoyl)-glycerol + (9Z)-octadecenoate + H(+). It carries out the reaction dioctanoylglycerol + H2O = octanoylglycerol + octanoate + H(+). Functionally, mitochondrial triacylglycerol (TAG) lipase with activity toward long-chain diacylglycerols (DAGs) and triacylglycerols (TAGs). Involved in mitochondrial lipid metabolism. The sequence is that of Triacylglycerol lipase 2 (TGL2) from Saccharomyces cerevisiae (strain ATCC 204508 / S288c) (Baker's yeast).